The sequence spans 374 residues: Actin-related protein 2/3 complex subunit 2B (374 aa).

Belongs to the ARPC2 family. Component of the Arp2/3 complex composed of ARP2, ARP3, ARPC1/p41-ARC, ARPC2/p34-ARC, ARPC3/p21-ARC, ARPC4/p20-ARC and ARPC5/p16-ARC. Expressed at low levels in all tissues with a relatively highest expression in inflorescences.

It localises to the cytoplasm. The protein localises to the cytoskeleton. It is found in the cell projection. Functions as actin-binding component of the Arp2/3 complex which is involved in regulation of actin polymerization and together with an activating nucleation-promoting factor (NPF) mediates the formation of branched actin networks. Seems to contact the mother actin filament. Arp2/3 complex plays a critical role in the control of cell morphogenesis via the modulation of cell polarity development. This Arabidopsis thaliana (Mouse-ear cress) protein is Actin-related protein 2/3 complex subunit 2B (ARPC2B).